The chain runs to 376 residues: Chaperone protein DnaJ (376 aa).

The J domain occupies 4 to 70 (DYYQILGVSK…QKRAAYDRFG (67 aa)). The segment at 139–217 (GVEKNISFSS…CHGLGRYHKQ (79 aa)) adopts a CR-type zinc-finger fold. Zn(2+) contacts are provided by cysteine 152, cysteine 155, cysteine 169, cysteine 172, cysteine 191, cysteine 194, cysteine 205, and cysteine 208. CXXCXGXG motif repeat units follow at residues 152–159 (CDTCHGSG), 169–176 (CDACGGVG), 191–198 (CHKCQGNG), and 205–212 (CKKCHGLG).

Belongs to the DnaJ family. In terms of assembly, homodimer. Requires Zn(2+) as cofactor.

It is found in the cytoplasm. Participates actively in the response to hyperosmotic and heat shock by preventing the aggregation of stress-denatured proteins and by disaggregating proteins, also in an autonomous, DnaK-independent fashion. Unfolded proteins bind initially to DnaJ; upon interaction with the DnaJ-bound protein, DnaK hydrolyzes its bound ATP, resulting in the formation of a stable complex. GrpE releases ADP from DnaK; ATP binding to DnaK triggers the release of the substrate protein, thus completing the reaction cycle. Several rounds of ATP-dependent interactions between DnaJ, DnaK and GrpE are required for fully efficient folding. Also involved, together with DnaK and GrpE, in the DNA replication of plasmids through activation of initiation proteins. The sequence is that of Chaperone protein DnaJ from Rickettsia bellii (strain OSU 85-389).